A 550-amino-acid polypeptide reads, in one-letter code: Eukaryotic translation initiation factor 3 subunit L (550 aa).

The disordered stretch occupies residues 1-20 (MVRDSFDGGHTGDPERDLAY). The 195-residue stretch at 309–503 (EATKIFVNCL…IDDSTTDLDF (195 aa)) folds into the PCI domain.

Belongs to the eIF-3 subunit L family. Component of the eukaryotic translation initiation factor 3 (eIF-3) complex.

The protein resides in the cytoplasm. In terms of biological role, component of the eukaryotic translation initiation factor 3 (eIF-3) complex, which is involved in protein synthesis of a specialized repertoire of mRNAs and, together with other initiation factors, stimulates binding of mRNA and methionyl-tRNAi to the 40S ribosome. The eIF-3 complex specifically targets and initiates translation of a subset of mRNAs involved in cell proliferation. The protein is Eukaryotic translation initiation factor 3 subunit L of Brugia malayi (Filarial nematode worm).